The primary structure comprises 650 residues: Methionine--tRNA ligase (650 aa).

Residues 11-21 carry the 'HIGH' region motif; sequence YYVNDIPHIGH. Residues Cys126, Cys129, Cys147, and Cys150 each contribute to the Zn(2+) site. The short motif at 301 to 305 is the 'KMSKS' region element; sequence KMSKS. Position 304 (Lys304) interacts with ATP. Positions 513-535 are disordered; sequence EKTEKAGEASPEKNEKEKKDAKE. Residues 549–650 form the tRNA-binding domain; the sequence is DFKKVEIKVG…REKIAGSLIS (102 aa).

The protein belongs to the class-I aminoacyl-tRNA synthetase family. MetG type 2A subfamily. In terms of assembly, homodimer. The cofactor is Zn(2+).

The protein resides in the cytoplasm. It catalyses the reaction tRNA(Met) + L-methionine + ATP = L-methionyl-tRNA(Met) + AMP + diphosphate. Its function is as follows. Is required not only for elongation of protein synthesis but also for the initiation of all mRNA translation through initiator tRNA(fMet) aminoacylation. The sequence is that of Methionine--tRNA ligase (metG) from Helicobacter pylori (strain ATCC 700392 / 26695) (Campylobacter pylori).